A 260-amino-acid chain; its full sequence is UPF0246 protein APL_0602 (260 aa).

The protein belongs to the UPF0246 family.

The chain is UPF0246 protein APL_0602 from Actinobacillus pleuropneumoniae serotype 5b (strain L20).